Consider the following 528-residue polypeptide: Na(+)/H(+) antiporter NhaB (528 aa).

The next 11 helical transmembrane spans lie at 10 to 30 (IGNF…SFLI), 63 to 83 (YPLQ…MTSA), 96 to 116 (VLLL…LLLF), 131 to 165 (VSLM…FYAI), 204 to 224 (LLMH…VGEP), 240 to 260 (FVVR…LTCL), 305 to 325 (VLVG…VGLV), 359 to 379 (LAVF…APVI), 391 to 411 (LVIF…VFVG), 449 to 469 (ATPN…APLI), and 476 to 496 (MVWM…LAIE).

Belongs to the NhaB Na(+)/H(+) (TC 2.A.34) antiporter family.

The protein resides in the cell inner membrane. The catalysed reaction is 2 Na(+)(in) + 3 H(+)(out) = 2 Na(+)(out) + 3 H(+)(in). Its function is as follows. Na(+)/H(+) antiporter that extrudes sodium in exchange for external protons. The sequence is that of Na(+)/H(+) antiporter NhaB from Shewanella sp. (strain W3-18-1).